A 956-amino-acid polypeptide reads, in one-letter code: Zinc fingers and homeoboxes protein 3 (956 aa).

Residues 1 to 107 form a required for nuclear localization region; sequence MASKRKSTTP…SEHTDFNKDP (107 aa). The disordered stretch occupies residues 22 to 66; that stretch reads DASMEAQPAETLPEGPQQDLPPEASAASSEAAQNPSSTDGSTLAN. Positions 42-58 are enriched in low complexity; sequence PPEASAASSEAAQNPSS. 2 C2H2-type zinc fingers span residues 77 to 100 and 109 to 132; these read YSCK…NSEH and FVCS…ATCH. A required for homodimerization and interaction with NFYA region spans residues 242–488; it reads ASASSAKNPH…LLTACPSITS (247 aa). A required for repressor activity region spans residues 303-502; sequence LSSIPTYNAA…DASIYKNKKS (200 aa). 2 DNA-binding regions (homeobox) span residues 304–363 and 494–553; these read SSIP…GISW and ASIY…RNLK. The tract at residues 497–555 is required for nuclear localization; that stretch reads YKNKKSHEQLSALKGSFCRNQFPGQSEVEHLTKVTGLSTREVRKWFSDRRYHCRNLKGS. 2 disordered regions span residues 598 to 618 and 666 to 695; these read PSAK…KYKE and KVNA…GEED. Phosphoserine occurs at positions 599 and 604. Residues 612–671 constitute a DNA-binding region (homeobox 3); that stretch reads TPTKYKERAPEQLRALESSFAQNPLPLDEELDRLRSETKMTRREIDSWFSERRKKVNAEE. Basic and acidic residues predominate over residues 666 to 677; that stretch reads KVNAEETKKAEE. The span at 679–695 shows a compositional bias: acidic residues; sequence ASQEEEEAAEDEGGEED. Phosphoserine is present on residues S680, S708, and S723. 2 consecutive DNA-binding regions (homeobox) follow at residues 764–823 and 835–894; these read PGKV…KNGQ and FPPG…TRAV. The disordered stretch occupies residues 890 to 956; that stretch reads ETRAVADTGS…PQAGRQLETD (67 aa). Residues S927 and S946 each carry the phosphoserine modification.

It belongs to the ZHX family. As to quaternary structure, homodimer (via homeobox domain 1). Heterodimer with ZHX1 (via homeobox domain 1). Heterodimer with ZHX2 (via homeobox domain 1). Heterodimerization with ZHX1 is a prerequisite for repressor activity. Interacts with NFYA. Widely expressed. High expression in kidney. Expressed during osteogenic differentiation.

The protein localises to the nucleus. Its function is as follows. Acts as a transcriptional repressor. Involved in the early stages of mesenchymal stem cell (MSC) osteogenic differentiation. Is a regulator of podocyte gene expression during primary glomerula disease. Binds to promoter DNA. The protein is Zinc fingers and homeoboxes protein 3 (ZHX3) of Homo sapiens (Human).